Reading from the N-terminus, the 175-residue chain is MKLNKLALVLGLGLSVVAGSALAADQGHGTVKFVGSIIDAPCSITPDTENQTVPLGQISTAALKDGGRSNSRDFKISLENCTTETYKTVQTTFTGSEATEVLEGSLGIEGIAKNAAVVITDAGGKQIKLGTPSAAQNLRDGNNDLNFAAYLQGSASEAAVPGDFTAIATFALTYQ.

The N-terminal stretch at Met1–Ala23 is a signal peptide. An intrachain disulfide couples Cys42 to Cys81.

It belongs to the fimbrial protein family.

The protein resides in the fimbrium. In terms of biological role, major structural component of mannose-resistant/proteus-like fimbriae of P.mirabilis. This Proteus mirabilis (strain HI4320) protein is Major MR/P fimbria protein (mrpA).